The primary structure comprises 334 residues: Forkhead box protein N2 (334 aa).

2 disordered regions span residues 1–52 (MGPV…SGTT) and 83–108 (SPLY…ASSK). The fork-head DNA-binding region spans 108–204 (KPPYSFSLLI…QALKKQPFSS (97 aa)).

It is found in the nucleus. This is Forkhead box protein N2 from Xenopus tropicalis (Western clawed frog).